A 241-amino-acid polypeptide reads, in one-letter code: Histone H1-II (241 aa).

The segment covering methionine 1–alanine 10 has biased composition (basic and acidic residues). Disordered stretches follow at residues methionine 1–proline 27 and asparagine 89–alanine 241. Over residues proline 11 to lysine 20 the composition is skewed to basic residues. The region spanning threonine 24–aspartate 95 is the H15 domain. Basic residues predominate over residues serine 99–proline 111. 3 repeat units span residues proline 111 to alanine 116, proline 117 to alanine 122, and proline 123 to alanine 128. An 8 X 6 AA repeats of P-K-K-A-[AK]-A region spans residues proline 111–alanine 217. A compositionally biased stretch (basic and acidic residues) spans proline 129–proline 155. Basic residues-rich tracts occupy residues lysine 156 to proline 184 and alanine 194 to alanine 241. Residues threonine 183–lysine 186 mediate DNA binding. A run of 5 repeats spans residues proline 184–alanine 189, proline 190–alanine 195, proline 196–alanine 201, proline 204–alanine 209, and proline 212–alanine 217. 2 consecutive DNA-binding regions follow at residues threonine 203–lysine 206 and threonine 211–lysine 214.

It belongs to the histone H1/H5 family.

It is found in the nucleus. The protein localises to the chromosome. Its function is as follows. Histones H1 are necessary for the condensation of nucleosome chains into higher-order structures. This chain is Histone H1-II (H1-II), found in Volvox carteri (Green alga).